Reading from the N-terminus, the 314-residue chain is Olfactory receptor 5P66 (314 aa).

Over methionine 1–isoleucine 28 the chain is Extracellular. An N-linked (GlcNAc...) asparagine glycan is attached at asparagine 8. The helical transmembrane segment at valine 29 to isoleucine 49 threads the bilayer. Residues leucine 50 to glutamine 57 are Cytoplasmic-facing. The chain crosses the membrane as a helical span at residues leucine 58–serine 78. The Extracellular portion of the chain corresponds to serine 79–isoleucine 102. Residues cysteine 100 and cysteine 192 are joined by a disulfide bond. A helical membrane pass occupies residues glutamine 103–tyrosine 123. At aspartate 124–serine 136 the chain is on the cytoplasmic side. Residues threonine 137–leucine 157 form a helical membrane-spanning segment. Residues asparagine 158–valine 199 lie on the Extracellular side of the membrane. Residues valine 200–serine 220 traverse the membrane as a helical segment. Residues tyrosine 221–alanine 240 are Cytoplasmic-facing. A helical transmembrane segment spans residues phenylalanine 241–isoleucine 261. The Extracellular portion of the chain corresponds to tyrosine 262–asparagine 274. A helical membrane pass occupies residues lysine 275–leucine 295. The Cytoplasmic portion of the chain corresponds to arginine 296–serine 314.

It belongs to the G-protein coupled receptor 1 family.

Its subcellular location is the cell membrane. Its function is as follows. Potential odorant receptor. This chain is Olfactory receptor 5P66, found in Mus musculus (Mouse).